Reading from the N-terminus, the 238-residue chain is Proteasome subunit beta type-6 (238 aa).

Alanine 2 is subject to N-acetylalanine. Residues alanine 2 to glycine 33 constitute a propeptide, removed in mature form. Residue threonine 34 is the Nucleophile of the active site. Threonine 68 bears the Phosphothreonine mark.

Belongs to the peptidase T1B family. As to quaternary structure, the 26S proteasome consists of a 20S proteasome core and two 19S regulatory subunits. The 20S proteasome core is a barrel-shaped complex made of 28 subunits that are arranged in four stacked rings. The two outer rings are each formed by seven alpha subunits, and the two inner rings are formed by seven beta subunits. The proteolytic activity is exerted by three beta-subunits PSMB5, PSMB6 and PSMB7.

Its subcellular location is the cytoplasm. The protein localises to the nucleus. The catalysed reaction is Cleavage of peptide bonds with very broad specificity.. Functionally, component of the 20S core proteasome complex involved in the proteolytic degradation of most intracellular proteins. This complex plays numerous essential roles within the cell by associating with different regulatory particles. Associated with two 19S regulatory particles, forms the 26S proteasome and thus participates in the ATP-dependent degradation of ubiquitinated proteins. The 26S proteasome plays a key role in the maintenance of protein homeostasis by removing misfolded or damaged proteins that could impair cellular functions, and by removing proteins whose functions are no longer required. Associated with the PA200 or PA28, the 20S proteasome mediates ubiquitin-independent protein degradation. This type of proteolysis is required in several pathways including spermatogenesis (20S-PA200 complex) or generation of a subset of MHC class I-presented antigenic peptides (20S-PA28 complex). Within the 20S core complex, PSMB6 displays a peptidylglutamyl-hydrolyzing activity also termed postacidic or caspase-like activity, meaning that the peptides bond hydrolysis occurs directly after acidic residues. This is Proteasome subunit beta type-6 (Psmb6) from Rattus norvegicus (Rat).